Reading from the N-terminus, the 868-residue chain is B-cell receptor CD22 (868 aa).

The signal sequence occupies residues 1-21 (MRVHYLWLLLILGHVASARYS). The 127-residue stretch at 22-148 (SANDWTVDHP…MEPIHLNVSE (127 aa)) folds into the Ig-like V-type domain. At 22–708 (SANDWTVDHP…YYSPETIGKR (687 aa)) the chain is on the extracellular side. 3 cysteine pairs are disulfide-bonded: cysteine 41–cysteine 177, cysteine 46–cysteine 112, and cysteine 171–cysteine 235. Residues asparagine 111 and asparagine 122 are each glycosylated (N-linked (GlcNAc...) asparagine). Arginine 130 serves as a coordination point for N-acetylneuraminate. 9 N-linked (GlcNAc...) asparagine glycosylation sites follow: asparagine 145, asparagine 174, asparagine 271, asparagine 281, asparagine 384, asparagine 414, asparagine 466, asparagine 567, and asparagine 595. 6 Ig-like C2-type domains span residues 153–250 (PYIQ…RTVR), 257–347 (PKLE…VELT), 352–435 (PEPS…AKLD), 440–521 (PKAV…VILN), 526–603 (PRDV…ETLS), and 614–697 (PRRL…STLT). 4 cysteine pairs are disulfide-bonded: cysteine 278/cysteine 330, cysteine 374/cysteine 417, cysteine 463/cysteine 505, and cysteine 550/cysteine 592. Cysteine 637 and cysteine 680 are disulfide-bonded. Residues 709–727 (VALGLGFCLTICILAIWGM) traverse the membrane as a helical segment. The Cytoplasmic segment spans residues 728-868 (KIQKKWKQNR…EDVDYVTLKH (141 aa)). A compositionally biased stretch (polar residues) spans 738-752 (SQQGLQENSSGQSFF). The interval 738-772 (SQQGLQENSSGQSFFVRNKKARRTPLSEGPQSQGC) is disordered. Residues serine 746, serine 747, and serine 750 each carry the phosphoserine modification. Positions 781-786 (VSYAIL) match the ITIM motif 1 motif. Phosphotyrosine is present on tyrosine 783. The disordered stretch occupies residues 790-812 (ESDTHNTGDAGTPATQAPPPNNS). A phosphotyrosine mark is found at tyrosine 828, tyrosine 843, and tyrosine 863. 2 consecutive short sequence motifs (ITIM motif) follow at residues 841–846 (IHYSEL) and 861–866 (VDYVTL).

The protein belongs to the immunoglobulin superfamily. SIGLEC (sialic acid binding Ig-like lectin) family. In terms of assembly, predominantly monomer of isoform CD22-beta. Also found as heterodimer of isoform CD22-beta and a shorter isoform. Interacts with PTPN6/SHP-1, LYN, SYK, PIK3R1/PIK3R2 and PLCG1 upon phosphorylation. Interacts with GRB2, INPP5D and SHC1 upon phosphorylation. May form a complex with INPP5D/SHIP, GRB2 and SHC1. In terms of processing, phosphorylated on tyrosine residues by LYN. Phosphorylation of Tyr-783 and Tyr-843 are involved in binding to SYK. Phosphorylation of Tyr-828 is involved in binding to GRB2. Phosphorylation of Tyr-863 is involved in binding to SYK, PLCG2 and PIK3R1/PIK3R2. In terms of tissue distribution, B-lymphocytes.

Its subcellular location is the cell membrane. Most highly expressed siglec (sialic acid-binding immunoglobulin-like lectin) on B-cells that plays a role in various aspects of B-cell biology including differentiation, antigen presentation, and trafficking to bone marrow. Binds to alpha 2,6-linked sialic acid residues of surface molecules such as CD22 itself, CD45 and IgM in a cis configuration. Can also bind to ligands on other cells as an adhesion molecule in a trans configuration. Acts as an inhibitory coreceptor on the surface of B-cells and inhibits B-cell receptor induced signaling, characterized by inhibition of the calcium mobilization and cellular activation. Mechanistically, the immunoreceptor tyrosine-based inhibitory motif domain is phosphorylated by the Src kinase LYN, which in turn leads to the recruitment of the protein tyrosine phosphatase 1/PTPN6, leading to the negative regulation of BCR signaling. If this negative signaling from is of sufficient strength, apoptosis of the B-cell can be induced. The sequence is that of B-cell receptor CD22 from Mus musculus (Mouse).